Consider the following 572-residue polypeptide: Proline--tRNA ligase (572 aa).

The protein belongs to the class-II aminoacyl-tRNA synthetase family. ProS type 1 subfamily. Homodimer.

The protein localises to the cytoplasm. The enzyme catalyses tRNA(Pro) + L-proline + ATP = L-prolyl-tRNA(Pro) + AMP + diphosphate. Catalyzes the attachment of proline to tRNA(Pro) in a two-step reaction: proline is first activated by ATP to form Pro-AMP and then transferred to the acceptor end of tRNA(Pro). As ProRS can inadvertently accommodate and process non-cognate amino acids such as alanine and cysteine, to avoid such errors it has two additional distinct editing activities against alanine. One activity is designated as 'pretransfer' editing and involves the tRNA(Pro)-independent hydrolysis of activated Ala-AMP. The other activity is designated 'posttransfer' editing and involves deacylation of mischarged Ala-tRNA(Pro). The misacylated Cys-tRNA(Pro) is not edited by ProRS. This is Proline--tRNA ligase from Haemophilus influenzae (strain 86-028NP).